A 117-amino-acid chain; its full sequence is Large ribosomal subunit protein bL20 (117 aa).

The protein belongs to the bacterial ribosomal protein bL20 family.

Its function is as follows. Binds directly to 23S ribosomal RNA and is necessary for the in vitro assembly process of the 50S ribosomal subunit. It is not involved in the protein synthesizing functions of that subunit. This Trichlorobacter lovleyi (strain ATCC BAA-1151 / DSM 17278 / SZ) (Geobacter lovleyi) protein is Large ribosomal subunit protein bL20.